The primary structure comprises 286 residues: Versiconal hemiacetal acetate esterase stcI (286 aa).

The Involved in the stabilization of the negatively charged intermediate by the formation of the oxyanion hole motif lies at 54–56 (HAG). Residues Ser-123, Asp-226, and His-256 contribute to the active site.

It belongs to the 'GDXG' lipolytic enzyme family.

The enzyme catalyses (2S,3S)-versiconal hemiacetal acetate + H2O = (2S-3S)-versiconal hemiacetal + acetate + H(+). It catalyses the reaction (3S)-versiconol acetate + H2O = (S)-versiconol + acetate + H(+). Its pathway is mycotoxin biosynthesis; sterigmatocystin biosynthesis. In terms of biological role, esterase; part of the gene cluster that mediates the biosynthesis of sterigmatocystin (ST), a polyketide-derived furanocoumarin which is part of the most toxic and carcinogenic compounds among the known mycotoxins. The first step in the biosynthesis of sterigmatocystin is the production of hexanoate by the fatty acid synthase (FAS) units stcJ and stcK. The polyketide backbone is assembled by the non-reducing polyketide synthase stcA by condensation of the starter hexanoyl-CoA and 7 malonyl-CoA extender units followed by cyclization and release of norsolorinic acid. Norsolorinic acid is the first stable intermediate in the biosynthesis of sterigmatocystin and is converted into averantin (AVN) by the ketoreductase stcE which reduces the hexanoate ketone to an alcohol. Averantin is then oxidized into 5'-hydroxyaverantin (HAVN) by the cytochrome P450 monooxygenase stcF. 5'-hydroxyaverantin is further converted to 5'-oxyaverantin (OAVN) by the 5'-hydroxyaverantin dehydrogenase stcG. The next step is the conversion of OAVN into averufin (AVF) which is catalyzed by a yet to be identified enzyme. The cytochrome P450 monooxygenase stcB and the flavin-binding monooxygenase stcW are both required for the conversion of averufin to 1-hydroxyversicolorone. The esterase stcI probably catalyzes the formation of versiconal hemiacetal acetate from 1-hydroxyversicolorone. The oxydoreductase stcN then probably catalyzes the biosynthetic step from versiconal to versicolorin B (VERB). The next step is performed by the versicolorin B desaturase stcL to produce versicolorin A (VERA). The ketoreductase stcU and the cytochrome P450 monooxygenase stcS are involved in the conversion of versicolorin A to demethylsterigmatocystin. The Baeyer-Villiger oxidas stcQ and the reductase stcR might be involved in the biosynthetic step from versicolorin A to demethylsterigmatocystin. The final step in the biosynthesis of sterigmatocystin is the methylation of demethylsterigmatocystin catalyzed by the methyltransferase stcP. The polypeptide is Versiconal hemiacetal acetate esterase stcI (Emericella nidulans (strain FGSC A4 / ATCC 38163 / CBS 112.46 / NRRL 194 / M139) (Aspergillus nidulans)).